We begin with the raw amino-acid sequence, 432 residues long: MNFDVAIIGGGLAGLTCGIALQQCGKRCVIINNGQAAIDFASGSLDLLSRMPSTTYGENRAVENLKENITALRNELPAHPYSLLGAEKVLAKAQDFERLANELNLDLIGSTEKNHWRVTGLGSLRGAWLSPNSVPTVQGNEPFPHKRIAVLGIEGYHDFQPQLLAANLVLNPQFEHCEVTSGFLNIPQLDELRKNAREFRSVNISQLLEHKLAFNDLVKEIIESAQGAEAVFLPACFGLENQEFMTALRDATKLALFELPTLPPSLLGMRQRIQLRHKFESLGGLMINGDSALNATFEGNKVRCINTRLLENEEITADNFVLASGSFFSKGLISEFDKIYEPVFESDIIGVEGFNQKDRFTWTVHRFAHPQPYQSAGVAINAQCQVQKCGQFLTNLYAVGNVIGGFNALELGCGSGVAVVTALAVADEILAK.

The protein belongs to the anaerobic G-3-P dehydrogenase subunit B family. In terms of assembly, composed of a catalytic GlpA/B dimer and of membrane bound GlpC. FMN serves as cofactor.

It carries out the reaction a quinone + sn-glycerol 3-phosphate = dihydroxyacetone phosphate + a quinol. The protein operates within polyol metabolism; glycerol degradation via glycerol kinase pathway; glycerone phosphate from sn-glycerol 3-phosphate (anaerobic route): step 1/1. Functionally, conversion of glycerol 3-phosphate to dihydroxyacetone. Uses fumarate or nitrate as electron acceptor. This is Anaerobic glycerol-3-phosphate dehydrogenase subunit B from Haemophilus influenzae (strain 86-028NP).